We begin with the raw amino-acid sequence, 65 residues long: Large ribosomal subunit protein bL35 (65 aa).

Residues 1–28 are disordered; it reads MPKMKTNRSAAKRFGKTGSGKFTRRRQN.

It belongs to the bacterial ribosomal protein bL35 family.

The sequence is that of Large ribosomal subunit protein bL35 from Solidesulfovibrio magneticus (strain ATCC 700980 / DSM 13731 / RS-1) (Desulfovibrio magneticus).